Here is a 588-residue protein sequence, read N- to C-terminus: Endogenous retrovirus group K member 7 Env polyprotein (588 aa).

The segment at 355–375 is fusion peptide; sequence FIFTLIAVIMGLIAVTATAAV. A helical membrane pass occupies residues 522–542; that stretch reads IGSTTIINLILILVCLFCLLL.

Belongs to the beta type-B retroviral envelope protein family. HERV class-II K(HML-2) env subfamily. The surface (SU) and transmembrane (TM) proteins form a heterodimer. SU and TM are attached by noncovalent interactions or by a labile interchain disulfide bond. In terms of processing, specific enzymatic cleavages in vivo yield the mature SU and TM proteins. As to expression, expressed in lung, placenta, testis and peripheral blood lymphocytes.

It is found in the virion. Its subcellular location is the cell membrane. Its function is as follows. Retroviral envelope proteins mediate receptor recognition and membrane fusion during early infection. Endogenous envelope proteins may have kept, lost or modified their original function during evolution. In terms of biological role, SU mediates receptor recognition. TM anchors the envelope heterodimer to the viral membrane through one transmembrane domain. The other hydrophobic domain, called fusion peptide, mediates fusion of the viral membrane with the target cell membrane. The sequence is that of Endogenous retrovirus group K member 7 Env polyprotein (ERVK-7) from Homo sapiens (Human).